Reading from the N-terminus, the 258-residue chain is Serine protease VLSP-3 (258 aa).

An N-terminal signal peptide occupies residues 1–18 (MVLIRVLANLLVLQLSYA). Residues 19–24 (QKSSEL) constitute a propeptide that is removed on maturation. In terms of domain architecture, Peptidase S1 spans 25–249 (VIGGDECNIN…YTDWIQSIIA (225 aa)). 6 disulfide bridges follow: Cys31–Cys163, Cys50–Cys66, Cys98–Cys256, Cys142–Cys210, Cys174–Cys189, and Cys200–Cys225. Asn44 is a glycosylation site (N-linked (GlcNAc...) asparagine). His65 functions as the Charge relay system in the catalytic mechanism. N-linked (GlcNAc...) asparagine glycans are attached at residues Asn79 and Asn103. The active-site Charge relay system is the Asp110. Residues Asn154 and Asn170 are each glycosylated (N-linked (GlcNAc...) asparagine). Ser204 (charge relay system) is an active-site residue. Asn251 is a glycosylation site (N-linked (GlcNAc...) asparagine).

The protein belongs to the peptidase S1 family. Snake venom subfamily. As to quaternary structure, monomer. As to expression, expressed by the venom gland.

It localises to the secreted. Its function is as follows. Snake venom serine protease that may act in the hemostasis system of the prey. The sequence is that of Serine protease VLSP-3 from Macrovipera lebetinus (Levantine viper).